Here is a 210-residue protein sequence, read N- to C-terminus: MATRITNKGLSKSSKAWMKEHLDDHYVQLAQKEGYRARAAYKLLEINEKTNLIKKGMTVVDLGSAPGSWSQVAGRLVGDEGILIASDILPMDALENVTFIQGDFREEAVFDRLMSEVGDRQVDVVLSDMAPNTSGHTAVDQPRMIYLCELAVDFALRVLPKGGSLVMKVFQGEGEQQLRQQLQSQFSKVRTIKPAASRPRSKEVFWVATK.

5 residues coordinate S-adenosyl-L-methionine: Gly-67, Trp-69, Asp-87, Asp-103, and Asp-128. Lys-168 acts as the Proton acceptor in catalysis.

Belongs to the class I-like SAM-binding methyltransferase superfamily. RNA methyltransferase RlmE family.

The protein localises to the cytoplasm. The catalysed reaction is uridine(2552) in 23S rRNA + S-adenosyl-L-methionine = 2'-O-methyluridine(2552) in 23S rRNA + S-adenosyl-L-homocysteine + H(+). In terms of biological role, specifically methylates the uridine in position 2552 of 23S rRNA at the 2'-O position of the ribose in the fully assembled 50S ribosomal subunit. This is Ribosomal RNA large subunit methyltransferase E from Psychrobacter sp. (strain PRwf-1).